The primary structure comprises 230 residues: Heptaprenylglyceryl phosphate synthase (230 aa).

K12 is a binding site for sn-glycerol 1-phosphate. Mg(2+) is bound by residues D14 and T40. Residues 159–164 (YVEYSG), G189, and 209–210 (GD) contribute to the sn-glycerol 1-phosphate site.

Belongs to the GGGP/HepGP synthase family. Group I subfamily. Homodimer. Requires Mg(2+) as cofactor.

It carries out the reaction sn-glycerol 1-phosphate + all-trans-heptaprenyl diphosphate = 3-heptaprenyl-sn-glycero-1-phosphate + diphosphate. It participates in membrane lipid metabolism; glycerophospholipid metabolism. In terms of biological role, prenyltransferase that catalyzes in vivo the transfer of the heptaprenyl moiety of heptaprenyl pyrophosphate (HepPP; 35 carbon atoms) to the C3 hydroxyl of sn-glycerol-1-phosphate (G1P), producing heptaprenylglyceryl phosphate (HepGP). This reaction is an ether-bond-formation step in the biosynthesis of archaea-type G1P-based membrane lipids found in Bacillales. The sequence is that of Heptaprenylglyceryl phosphate synthase from Staphylococcus epidermidis (strain ATCC 35984 / DSM 28319 / BCRC 17069 / CCUG 31568 / BM 3577 / RP62A).